A 100-amino-acid polypeptide reads, in one-letter code: MVKRTHGYRYKSRKLLRKKPRERGMSGLSRLLYEYKPGDKVVIDIDPTYITTAPHRRYQGKVGVVVGTRGRAYVIETYLGDKKKIVITTADHLVPYQGGS.

The span at 1–21 (MVKRTHGYRYKSRKLLRKKPR) shows a compositional bias: basic residues. The interval 1–22 (MVKRTHGYRYKSRKLLRKKPRE) is disordered.

This sequence belongs to the eukaryotic ribosomal protein eL21 family.

The protein is Large ribosomal subunit protein eL21 of Pyrobaculum neutrophilum (strain DSM 2338 / JCM 9278 / NBRC 100436 / V24Sta) (Thermoproteus neutrophilus).